The chain runs to 86 residues: U15-lycotoxin-Ls1a (86 aa).

A signal peptide spans 1–20; the sequence is MNSKIFAVLFLLAFLSCVLS. In terms of domain architecture, WAP spans 21–66; sequence DQYCPKSSITACKKMNIRNDCCKDDDCTGGSWCCATPCGNFCKYPT. Cystine bridges form between cysteine 24/cysteine 54, cysteine 32/cysteine 58, cysteine 41/cysteine 53, cysteine 42/cysteine 80, and cysteine 47/cysteine 62.

The protein belongs to the venom protein 11 family. 01 (wap-1) subfamily. Post-translationally, contains 5 disulfide bonds. Expressed by the venom gland.

It localises to the secreted. Its function is as follows. Has antibacterial activity. The polypeptide is U15-lycotoxin-Ls1a (Lycosa singoriensis (Wolf spider)).